The following is a 315-amino-acid chain: Replication-associated protein VP4 (315 aa).

Catalysis depends on O-(5'-phospho-DNA)-tyrosine intermediate residues Y176 and Y180. The stretch at 253-315 forms a coiled coil; that stretch reads EYDAKVKLKS…FKQLQEKLKL (63 aa).

Belongs to the microviridae Rep protein family.

It catalyses the reaction ATP + (deoxyribonucleotide)n-3'-hydroxyl + 5'-phospho-(deoxyribonucleotide)m = (deoxyribonucleotide)n+m + AMP + diphosphate.. In terms of biological role, plays an essential role in viral DNA replication. Binds the origin of replication and cleaves the dsDNA replicative form I (RFI) and becomes covalently bound to it via phosphotyrosine bond, generating the dsDNA replicative form II (RFII). In turn, viral DNA replication initiates at the 3'-OH of the cleavage site. After one round of rolling circle synthesis, protein VP4 is linked to the newly synthesized ssDNA and joins the ends of the displaced strand to generate a circular single-stranded molecule ready to be packed into a virion. This is Replication-associated protein VP4 from Bdellovibrio bacteriovorus (Bacteriophage phiMH2K).